We begin with the raw amino-acid sequence, 510 residues long: NAD(P)H-quinone oxidoreductase subunit 2 A, chloroplastic (510 aa).

The next 12 membrane-spanning stretches (helical) occupy residues 31 to 51, 59 to 79, 99 to 119, 124 to 144, 149 to 169, 183 to 203, 229 to 249, 295 to 315, 323 to 343, 354 to 374, 395 to 415, and 418 to 438; these read FIFPECILIFGLILLLMIDLT, WFYFISSTSLVISITALLFRW, IFQFLILLCSTLCIPLSVEYI, MAITEFLLFVLTATLGGMFLC, LITIFVAPECFSLCSYLLSGY, YLLMGGASSSILVHGFSWLYG, ISIALISITVGLGFKLSPAPF, WHLLLEILAILSMILGNLLAI, MLAYSSIGQIGYVIIGIIVGD, YMLFYISMNLGTFACIVLFGL, ALSLALCLLSLGGLPPLAGFF, and LYLFWCGWQAGLYFLVSIGLL.

The protein belongs to the complex I subunit 2 family. NDH is composed of at least 16 different subunits, 5 of which are encoded in the nucleus.

It localises to the plastid. Its subcellular location is the chloroplast thylakoid membrane. The catalysed reaction is a plastoquinone + NADH + (n+1) H(+)(in) = a plastoquinol + NAD(+) + n H(+)(out). It catalyses the reaction a plastoquinone + NADPH + (n+1) H(+)(in) = a plastoquinol + NADP(+) + n H(+)(out). Functionally, NDH shuttles electrons from NAD(P)H:plastoquinone, via FMN and iron-sulfur (Fe-S) centers, to quinones in the photosynthetic chain and possibly in a chloroplast respiratory chain. The immediate electron acceptor for the enzyme in this species is believed to be plastoquinone. Couples the redox reaction to proton translocation, and thus conserves the redox energy in a proton gradient. The protein is NAD(P)H-quinone oxidoreductase subunit 2 A, chloroplastic of Oryza nivara (Indian wild rice).